A 218-amino-acid chain; its full sequence is Enhancer of split M2 protein (218 aa).

The span at 1–25 shows a compositional bias: low complexity; sequence MYLDTKNLTASSTSALTAATASNSK. 3 disordered regions span residues 1-30, 64-86, and 137-164; these read MYLD…TRRM, NTQQ…KSTP, and GRNC…SSSA. Positions 147 to 163 are enriched in low complexity; the sequence is SSNINSSSSSSNMNSSS.

Functionally, part of the Notch signaling pathway. This Drosophila melanogaster (Fruit fly) protein is Enhancer of split M2 protein.